The sequence spans 255 residues: Type III pantothenate kinase (255 aa).

7 to 14 (DVGNTRLK) provides a ligand contact to ATP. Substrate contacts are provided by residues Y96 and 103-106 (GADR). Residue D105 is the Proton acceptor of the active site. T133 contacts ATP. T183 contacts substrate.

It belongs to the type III pantothenate kinase family. As to quaternary structure, homodimer. Requires NH4(+) as cofactor. It depends on K(+) as a cofactor.

Its subcellular location is the cytoplasm. It carries out the reaction (R)-pantothenate + ATP = (R)-4'-phosphopantothenate + ADP + H(+). Its pathway is cofactor biosynthesis; coenzyme A biosynthesis; CoA from (R)-pantothenate: step 1/5. Functionally, catalyzes the phosphorylation of pantothenate (Pan), the first step in CoA biosynthesis. This Polaromonas sp. (strain JS666 / ATCC BAA-500) protein is Type III pantothenate kinase.